Consider the following 155-residue polypeptide: Endoribonuclease YbeY (155 aa).

The disordered stretch occupies residues 64–84; the sequence is SFPMDEMRAPGDDEDPPSGLL. Residues H115, H119, and H125 each contribute to the Zn(2+) site.

It belongs to the endoribonuclease YbeY family. Zn(2+) serves as cofactor.

It is found in the cytoplasm. Its function is as follows. Single strand-specific metallo-endoribonuclease involved in late-stage 70S ribosome quality control and in maturation of the 3' terminus of the 16S rRNA. The polypeptide is Endoribonuclease YbeY (Cutibacterium acnes (strain DSM 16379 / KPA171202) (Propionibacterium acnes)).